Here is a 324-residue protein sequence, read N- to C-terminus: Cytosolic sulfotransferase 13 (324 aa).

Residue 76–81 (KSGTTW) coordinates 3'-phosphoadenylyl sulfate. H134 serves as the catalytic Proton acceptor. 3'-phosphoadenylyl sulfate contacts are provided by residues R156, S164, Y222, and 288–290 (RKG).

This sequence belongs to the sulfotransferase 1 family.

The protein localises to the cytoplasm. Its function is as follows. Sulfotransferase that utilizes 3'-phospho-5'-adenylyl sulfate (PAPS) as sulfonate donor. The polypeptide is Cytosolic sulfotransferase 13 (SOT13) (Arabidopsis thaliana (Mouse-ear cress)).